Here is a 142-residue protein sequence, read N- to C-terminus: uncharacterized protein (142 aa).

The next 3 membrane-spanning stretches (helical) occupy residues 3-23, 30-50, and 91-111; these read LIFI…FNLL, SVSW…AVWI, and FFLL…AYFS.

Its subcellular location is the membrane. This is an uncharacterized protein from Saccharomyces cerevisiae (strain ATCC 204508 / S288c) (Baker's yeast).